The sequence spans 110 residues: Large ribosomal subunit protein uL22 (110 aa).

This sequence belongs to the universal ribosomal protein uL22 family. Part of the 50S ribosomal subunit.

This protein binds specifically to 23S rRNA; its binding is stimulated by other ribosomal proteins, e.g. L4, L17, and L20. It is important during the early stages of 50S assembly. It makes multiple contacts with different domains of the 23S rRNA in the assembled 50S subunit and ribosome. Functionally, the globular domain of the protein is located near the polypeptide exit tunnel on the outside of the subunit, while an extended beta-hairpin is found that lines the wall of the exit tunnel in the center of the 70S ribosome. The sequence is that of Large ribosomal subunit protein uL22 from Pseudomonas savastanoi pv. phaseolicola (strain 1448A / Race 6) (Pseudomonas syringae pv. phaseolicola (strain 1448A / Race 6)).